Consider the following 203-residue polypeptide: MRLTRDFYAKDARVLAKELLGKVLVREVDGIKLKGKIVETEAYIGAIDKASHAYGGRRTKRTEPLYGKPGIAYVYFIYGKYFCFNIISKTEGEAEGVLIRALEPLENINLISKLRFNKEFEELNNYQRKNITSGPSKLCMAFNINRDNNWEDLCESSSLYVEDVLYNDFEIIETVRVGIDYAEEARDFLWRYYIKDNAFVSVK.

The protein belongs to the DNA glycosylase MPG family.

The chain is Putative 3-methyladenine DNA glycosylase from Clostridium botulinum (strain Loch Maree / Type A3).